The primary structure comprises 483 residues: Aspartyl/glutamyl-tRNA(Asn/Gln) amidotransferase subunit B (483 aa).

It belongs to the GatB/GatE family. GatB subfamily. In terms of assembly, heterotrimer of A, B and C subunits.

The enzyme catalyses L-glutamyl-tRNA(Gln) + L-glutamine + ATP + H2O = L-glutaminyl-tRNA(Gln) + L-glutamate + ADP + phosphate + H(+). It catalyses the reaction L-aspartyl-tRNA(Asn) + L-glutamine + ATP + H2O = L-asparaginyl-tRNA(Asn) + L-glutamate + ADP + phosphate + 2 H(+). Allows the formation of correctly charged Asn-tRNA(Asn) or Gln-tRNA(Gln) through the transamidation of misacylated Asp-tRNA(Asn) or Glu-tRNA(Gln) in organisms which lack either or both of asparaginyl-tRNA or glutaminyl-tRNA synthetases. The reaction takes place in the presence of glutamine and ATP through an activated phospho-Asp-tRNA(Asn) or phospho-Glu-tRNA(Gln). In Rickettsia felis (strain ATCC VR-1525 / URRWXCal2) (Rickettsia azadi), this protein is Aspartyl/glutamyl-tRNA(Asn/Gln) amidotransferase subunit B.